Consider the following 328-residue polypeptide: GMP reductase (328 aa).

The Thioimidate intermediate role is filled by cysteine 176. 205-228 (IIADGGIRTHGDIAKSIRFGASMI) serves as a coordination point for NADP(+).

The protein belongs to the IMPDH/GMPR family. GuaC type 2 subfamily.

It catalyses the reaction IMP + NH4(+) + NADP(+) = GMP + NADPH + 2 H(+). Catalyzes the irreversible NADPH-dependent deamination of GMP to IMP. It functions in the conversion of nucleobase, nucleoside and nucleotide derivatives of G to A nucleotides, and in maintaining the intracellular balance of A and G nucleotides. The protein is GMP reductase of Streptococcus pneumoniae serotype 19F (strain G54).